The primary structure comprises 1389 residues: MEVLMAERADLVFRNKVIDGTAIKRLISRLIDHFGMAYTSHILDQVKTLGFRQATATSISLGIDDLLTIPSKGWLVQDAEQQRLILEKHHHYGNVHAVEKLRQSIEIWYATSEYLRQEMNPNFRMTDPFNPVHMMSFSGARGNASQVHQLVGMRGLMSDPQGQMIDLPIQSNLREGLSLTEYIISCYGARKGVVDTAVRTSDAGYLTRRLVEVVQHIVVRRTDCGTIQGISVSPPNGMMPERIFIQTLIGRVLADYIYIGSRCIAVRNQDIGIGLVNRFITFQTQPISIRTPFTCKSTSWICRLCYGRSPTHGDLVELGEAVGIIAGQSIGEPGTQLTLRTFHTGGVFTGGTAEHVRAPSNGKIKFNEDLVHPTRTRHGHPAFLCSIDLYVTIESEDIIHNVTIPPKSFILVQNDQYVESEQVIAEIRAGTYTFHFKERVRKHIYSDSEGEMHWSTDVYHAPDFTYSNVHLLPKTSHLWILSGGSYKSSVVPFSIHKDQDQTNVYFLSAAKGKARNSFSVNNDQDQGKHKFFTSGLSGKKESGIPDYSEFNRILDTDHSNLIFPSILHKDSDLFLLAKRRRNRFIIPFQWIQEREKELWPRSSISIEIPINGIFRKNSILAYFDDLQYRRKGSGITKYGAIGLHSILKKEDLIEYGGVKEFKPKYQTKVDQFFFIPEEVHILPESFSIMVRNNSIIGVDTRITLNTRSRVGGLVRVEKKNKRIELKIFSGDIHFPVEMDKIFRHSGILIPPGRVKKEFKESKKWKNWIYVQSITPTKKKYFVLVRPVIIYEIADGINLETLFPQDPLQEKDNLELRVVNYILYGNGKPILGISGTCIQLVRTCLVLNWDQGNKSSSSEETHASFVEVSTRDLIRDFLRINLVKSHISYIRKRNDPLGSVLISDNRSDRTNPFYSIYSKEKIRQLLKENQGTIHTLLNRSKESQSLIILSSSNCFEMGPFNDVKHYNVIKESIKRDPLIPIRNSLGPLGTACQVANFYYILKTHNQISVTKNLQLENLKQTFQVLKYYLMDENGRIYNSDPCSNILFNPFNLNWHFLHHNYCEKKSTIISLGQFFFENVCITKHGPHLKSGQVIIVQIDSVVIRSAKSYLATPGATVHGHYGEILSEGDTLVTFIYEKSRSGDITQGLPKVEQVLEVRSIDSISMNLEKRVEGWNERITRILGIPWGFLIGAELTIVQSRISLVNKIQKVYRSQGVQIHNRHIEIIVRQITSKVLVSEDGMSNVFLPGELIGLFRAERTGRALKEAICYQAILLGITKASLNTQSFISEASFQETARVLAKAALRGRIDWLKGLKENVVLGGMIPVGTGFKGLVHRSKQHNNIPLETKKKNLFECEMRDILFHHKELFDFCISTNIHDTSEHLFLGFNDS.

Residues C224, C295, C302, and C305 each contribute to the Zn(2+) site.

Belongs to the RNA polymerase beta' chain family. RpoC2 subfamily. As to quaternary structure, in plastids the minimal PEP RNA polymerase catalytic core is composed of four subunits: alpha, beta, beta', and beta''. When a (nuclear-encoded) sigma factor is associated with the core the holoenzyme is formed, which can initiate transcription. Requires Zn(2+) as cofactor.

Its subcellular location is the plastid. It is found in the chloroplast. The catalysed reaction is RNA(n) + a ribonucleoside 5'-triphosphate = RNA(n+1) + diphosphate. Functionally, DNA-dependent RNA polymerase catalyzes the transcription of DNA into RNA using the four ribonucleoside triphosphates as substrates. The polypeptide is DNA-directed RNA polymerase subunit beta'' (Morus indica (Mulberry)).